A 416-amino-acid polypeptide reads, in one-letter code: Nuclear hormone receptor family member nhr-67 (416 aa).

Positions 18 to 98 form a DNA-binding region, nuclear receptor; that stretch reads DVDCRVCEDH…IGMNKDAVQH (81 aa). NR C4-type zinc fingers lie at residues 21–41 and 57–86; these read CRVC…CDGC and CKNK…LRKC. The segment at 331-398 is disordered; that stretch reads KTETEEGEDI…SSRPRHSIRS (68 aa). Over residues 335-346 the composition is skewed to acidic residues; the sequence is EEGEDIEEEDDA. Residues 377 to 390 are compositionally biased toward low complexity; that stretch reads SSTQPSSASSPSSS.

This sequence belongs to the nuclear hormone receptor family. As to expression, expressed in linker cell.

It is found in the nucleus. Orphan nuclear receptor that binds DNA containing an extended core motif half-site sequence 5'-AAGTCA-3'. In males, plays an essential role in the migration of the linker cell which guides gonad elongation during the L3 and L4 stages of larval development by negatively regulating the expression of netrin receptor unc-5 at the mid-L3 stage. Involved in the regulation of non-apoptotic cell death in the linker cell, acting upstream of or in parallel to transcription factor hsf-1. Represses hypoxia response genes, fmo-2 and acs-2, in both normoxic and hypoxic conditions, probably acting via repression of nuclear receptor nhr-49. The chain is Nuclear hormone receptor family member nhr-67 (nhr-67) from Caenorhabditis elegans.